A 176-amino-acid polypeptide reads, in one-letter code: Cell division protein ZapC (176 aa).

This sequence belongs to the ZapC family. Interacts directly with FtsZ.

The protein localises to the cytoplasm. In terms of biological role, contributes to the efficiency of the cell division process by stabilizing the polymeric form of the cell division protein FtsZ. Acts by promoting interactions between FtsZ protofilaments and suppressing the GTPase activity of FtsZ. The chain is Cell division protein ZapC from Pseudoalteromonas translucida (strain TAC 125).